The primary structure comprises 322 residues: ATP-dependent 6-phosphofructokinase (322 aa).

Residue G11 participates in ATP binding. 21–25 (RAVVR) lines the ADP pocket. ATP contacts are provided by residues 72-73 (RC) and 102-105 (GDGS). D103 contributes to the Mg(2+) binding site. 127–129 (TID) serves as a coordination point for substrate. The active-site Proton acceptor is the D129. Position 156 (R156) interacts with ADP. Substrate-binding positions include R164 and 171 to 173 (MGR). Residues 187–189 (GAE), R213, and 215–217 (KKH) each bind ADP. Substrate contacts are provided by residues E224, R245, and 251–254 (HIQR).

Belongs to the phosphofructokinase type A (PFKA) family. ATP-dependent PFK group I subfamily. Prokaryotic clade 'B1' sub-subfamily. In terms of assembly, homotetramer. Mg(2+) is required as a cofactor.

The protein resides in the cytoplasm. It carries out the reaction beta-D-fructose 6-phosphate + ATP = beta-D-fructose 1,6-bisphosphate + ADP + H(+). The protein operates within carbohydrate degradation; glycolysis; D-glyceraldehyde 3-phosphate and glycerone phosphate from D-glucose: step 3/4. With respect to regulation, allosterically activated by ADP and other diphosphonucleosides, and allosterically inhibited by phosphoenolpyruvate. Its function is as follows. Catalyzes the phosphorylation of D-fructose 6-phosphate to fructose 1,6-bisphosphate by ATP, the first committing step of glycolysis. The sequence is that of ATP-dependent 6-phosphofructokinase from Staphylococcus carnosus (strain TM300).